The primary structure comprises 156 residues: MTKKVGIVDTTFARVDMASIAIKKLKELSPNIKIIRKTVPGIKDLPVACKKLLEEEGCDIVMALGMPGKAEKDKVCAHEASLGLMLAQLMTNKHIIEVFVHEDEAKDDKELDWLAKRRAEEHAENVYYLLFKPEYLTRMAGKGLRQGFEDAGPARE.

It belongs to the DMRL synthase family.

The catalysed reaction is 2 6,7-dimethyl-8-(1-D-ribityl)lumazine + H(+) = 5-amino-6-(D-ribitylamino)uracil + riboflavin. The protein operates within cofactor biosynthesis; riboflavin biosynthesis; riboflavin from 2-hydroxy-3-oxobutyl phosphate and 5-amino-6-(D-ribitylamino)uracil: step 2/2. The polypeptide is Riboflavin synthase (ribC) (Methanocaldococcus jannaschii (strain ATCC 43067 / DSM 2661 / JAL-1 / JCM 10045 / NBRC 100440) (Methanococcus jannaschii)).